A 380-amino-acid polypeptide reads, in one-letter code: MALNLRKNHPLLKIINDSLIDLPTPSNISIWWNFGSLLGICLVTQIITGLLLAAHYTADTSLAFNSVAHMCRNVQFGWLIRNLHANGASLFFICIYLHIGRGFYYGSYLNKETWNIGVILLLTLMATAFVGYVLPWGQMSFWGATVITNLFSAIPYIGQTLVEWAWGGFSVDNPTLTRFFALHFLLPFVIAGLTLVHLTFLHETGSNNPLGIPSDCDKIPFHPYYSIKDILGFALMLISLATLALFSPNLLGDPENFTPANPLATPPHIKPEWYFLFAYAILRSIPNKLGGVLALAASVLILFLIPLLHTSKQRSMTFRPLSQILFWILVTDLLILTWVGSQPVEHPFIIIGQLASFSYFMIILVLFPIVGALENKLLNL.

The next 4 helical transmembrane spans lie at 34–54 (FGSLLGICLVTQIITGLLLAA), 78–99 (WLIRNLHANGASLFFICIYLHI), 114–134 (WNIGVILLLTLMATAFVGYVL), and 179–199 (FFALHFLLPFVIAGLTLVHLT). Residues histidine 84 and histidine 98 each coordinate heme b. Residues histidine 183 and histidine 197 each contribute to the heme b site. Histidine 202 contacts a ubiquinone. The next 4 helical transmembrane spans lie at 227–247 (IKDILGFALMLISLATLALFS), 289–309 (LGGVLALAASVLILFLIPLLH), 321–341 (LSQILFWILVTDLLILTWVGS), and 348–368 (FIIIGQLASFSYFMIILVLFP).

It belongs to the cytochrome b family. As to quaternary structure, the cytochrome bc1 complex contains 11 subunits: 3 respiratory subunits (MT-CYB, CYC1 and UQCRFS1), 2 core proteins (UQCRC1 and UQCRC2) and 6 low-molecular weight proteins (UQCRH/QCR6, UQCRB/QCR7, UQCRQ/QCR8, UQCR10/QCR9, UQCR11/QCR10 and a cleavage product of UQCRFS1). This cytochrome bc1 complex then forms a dimer. Requires heme b as cofactor.

It is found in the mitochondrion inner membrane. Its function is as follows. Component of the ubiquinol-cytochrome c reductase complex (complex III or cytochrome b-c1 complex) that is part of the mitochondrial respiratory chain. The b-c1 complex mediates electron transfer from ubiquinol to cytochrome c. Contributes to the generation of a proton gradient across the mitochondrial membrane that is then used for ATP synthesis. The polypeptide is Cytochrome b (MT-CYB) (Paradisaea rubra (Red bird of paradise)).